A 100-amino-acid chain; its full sequence is Small ubiquitin-related modifier 1 (100 aa).

Basic and acidic residues predominate over residues 1 to 12; the sequence is MSAAGEEDKKPA. Residues 1 to 23 form a disordered region; sequence MSAAGEEDKKPAGGEGGGAHINL. The Ubiquitin-like domain occupies 19-96; sequence AHINLKVKGQ…IDAMLHQTGG (78 aa). A Glycyl lysine isopeptide (Gly-Lys) (interchain with K-? in acceptor proteins) cross-link involves residue Gly96.

It belongs to the ubiquitin family. SUMO subfamily. As to quaternary structure, interacts with SAE2, SCE1 and SIZ1. Covalently attached to a number of proteins.

The protein resides in the nucleus. It is found in the cytoplasm. Ubiquitin-like protein which can be covalently attached to target lysines as a monomer. Does not seem to be involved in protein degradation and may function as an antagonist of ubiquitin in the degradation process. The sequence is that of Small ubiquitin-related modifier 1 (SUMO1) from Oryza sativa subsp. japonica (Rice).